The chain runs to 84 residues: UPF0291 protein EUBELI_00985 (84 aa).

This sequence belongs to the UPF0291 family.

It localises to the cytoplasm. The polypeptide is UPF0291 protein EUBELI_00985 (Lachnospira eligens (strain ATCC 27750 / DSM 3376 / VPI C15-48 / C15-B4) (Eubacterium eligens)).